The chain runs to 155 residues: Endoribonuclease YbeY (155 aa).

H114, H118, and H124 together coordinate Zn(2+).

This sequence belongs to the endoribonuclease YbeY family. Zn(2+) serves as cofactor.

The protein resides in the cytoplasm. Functionally, single strand-specific metallo-endoribonuclease involved in late-stage 70S ribosome quality control and in maturation of the 3' terminus of the 16S rRNA. This Escherichia coli O1:K1 / APEC protein is Endoribonuclease YbeY.